We begin with the raw amino-acid sequence, 240 residues long: Zein-alpha 19C1 (240 aa).

An N-terminal signal peptide occupies residues 1–21 (MATKIFSLLMLLALSACVANA).

Belongs to the zein family.

In terms of biological role, zeins are major seed storage proteins. This chain is Zein-alpha 19C1, found in Zea mays (Maize).